The following is a 2430-amino-acid chain: DNA-directed RNA polymerase subunit beta'' (2430 aa).

Cys-336, Cys-455, Cys-462, and Cys-465 together coordinate Zn(2+).

It belongs to the RNA polymerase beta' chain family. RpoC2 subfamily. In plastids the minimal PEP RNA polymerase catalytic core is composed of four subunits: alpha, beta, beta', and beta''. When a (nuclear-encoded) sigma factor is associated with the core the holoenzyme is formed, which can initiate transcription. The cofactor is Zn(2+).

The protein resides in the plastid. Its subcellular location is the chloroplast. It catalyses the reaction RNA(n) + a ribonucleoside 5'-triphosphate = RNA(n+1) + diphosphate. DNA-dependent RNA polymerase catalyzes the transcription of DNA into RNA using the four ribonucleoside triphosphates as substrates. The sequence is that of DNA-directed RNA polymerase subunit beta'' from Stigeoclonium helveticum (Green alga).